Consider the following 220-residue polypeptide: Thiamine-phosphate synthase (220 aa).

Residues 47-51 (QYREK) and asparagine 78 contribute to the 4-amino-2-methyl-5-(diphosphooxymethyl)pyrimidine site. The Mg(2+) site is built by aspartate 79 and aspartate 98. Position 117 (serine 117) interacts with 4-amino-2-methyl-5-(diphosphooxymethyl)pyrimidine. 143–145 (TAT) serves as a coordination point for 2-[(2R,5Z)-2-carboxy-4-methylthiazol-5(2H)-ylidene]ethyl phosphate. Lysine 146 contributes to the 4-amino-2-methyl-5-(diphosphooxymethyl)pyrimidine binding site. 2-[(2R,5Z)-2-carboxy-4-methylthiazol-5(2H)-ylidene]ethyl phosphate-binding positions include glycine 174 and 194-195 (IS).

This sequence belongs to the thiamine-phosphate synthase family. The cofactor is Mg(2+).

The enzyme catalyses 2-[(2R,5Z)-2-carboxy-4-methylthiazol-5(2H)-ylidene]ethyl phosphate + 4-amino-2-methyl-5-(diphosphooxymethyl)pyrimidine + 2 H(+) = thiamine phosphate + CO2 + diphosphate. The catalysed reaction is 2-(2-carboxy-4-methylthiazol-5-yl)ethyl phosphate + 4-amino-2-methyl-5-(diphosphooxymethyl)pyrimidine + 2 H(+) = thiamine phosphate + CO2 + diphosphate. It carries out the reaction 4-methyl-5-(2-phosphooxyethyl)-thiazole + 4-amino-2-methyl-5-(diphosphooxymethyl)pyrimidine + H(+) = thiamine phosphate + diphosphate. It functions in the pathway cofactor biosynthesis; thiamine diphosphate biosynthesis; thiamine phosphate from 4-amino-2-methyl-5-diphosphomethylpyrimidine and 4-methyl-5-(2-phosphoethyl)-thiazole: step 1/1. Condenses 4-methyl-5-(beta-hydroxyethyl)thiazole monophosphate (THZ-P) and 2-methyl-4-amino-5-hydroxymethyl pyrimidine pyrophosphate (HMP-PP) to form thiamine monophosphate (TMP). In Methanosarcina barkeri (strain Fusaro / DSM 804), this protein is Thiamine-phosphate synthase.